Here is a 185-residue protein sequence, read N- to C-terminus: Small ribosomal subunit protein uS5 (185 aa).

The S5 DRBM domain maps to 29–92; the sequence is LEEKVVKINR…EKAKKQLVRI (64 aa).

It belongs to the universal ribosomal protein uS5 family. Part of the 30S ribosomal subunit. Contacts proteins S4 and S8.

Functionally, with S4 and S12 plays an important role in translational accuracy. In terms of biological role, located at the back of the 30S subunit body where it stabilizes the conformation of the head with respect to the body. The protein is Small ribosomal subunit protein uS5 of Aster yellows witches'-broom phytoplasma (strain AYWB).